The sequence spans 148 residues: MTIWVDADACPKMIKDILFRAAIRTNTNLILVANSYLTYPNSPFIRSVLVEKGYDRADHYITSHMKAKDLVITADIPLAAEVIVKQGLAMSPRGELFTANNIKQRLTLRDINEQLRSAGERTGGPSALSAREKTNFANALDRWLAKSK.

The protein belongs to the UPF0178 family.

The sequence is that of UPF0178 protein lpp0103 from Legionella pneumophila (strain Paris).